The sequence spans 363 residues: UDP-N-acetylglucosamine--N-acetylmuramyl-(pentapeptide) pyrophosphoryl-undecaprenol N-acetylglucosamine transferase (363 aa).

UDP-N-acetyl-alpha-D-glucosamine-binding positions include T14 to G16, N122, R163, S190, and Q285.

Belongs to the glycosyltransferase 28 family. MurG subfamily.

Its subcellular location is the cell inner membrane. The catalysed reaction is di-trans,octa-cis-undecaprenyl diphospho-N-acetyl-alpha-D-muramoyl-L-alanyl-D-glutamyl-meso-2,6-diaminopimeloyl-D-alanyl-D-alanine + UDP-N-acetyl-alpha-D-glucosamine = di-trans,octa-cis-undecaprenyl diphospho-[N-acetyl-alpha-D-glucosaminyl-(1-&gt;4)]-N-acetyl-alpha-D-muramoyl-L-alanyl-D-glutamyl-meso-2,6-diaminopimeloyl-D-alanyl-D-alanine + UDP + H(+). It functions in the pathway cell wall biogenesis; peptidoglycan biosynthesis. Functionally, cell wall formation. Catalyzes the transfer of a GlcNAc subunit on undecaprenyl-pyrophosphoryl-MurNAc-pentapeptide (lipid intermediate I) to form undecaprenyl-pyrophosphoryl-MurNAc-(pentapeptide)GlcNAc (lipid intermediate II). The polypeptide is UDP-N-acetylglucosamine--N-acetylmuramyl-(pentapeptide) pyrophosphoryl-undecaprenol N-acetylglucosamine transferase (Prochlorococcus marinus (strain AS9601)).